Reading from the N-terminus, the 268-residue chain is Putative ABC transporter ATP-binding protein MK0182 (268 aa).

Positions Met-1 to Lys-229 constitute an ABC transporter domain. Gly-29–Thr-36 serves as a coordination point for ATP.

This sequence belongs to the ABC transporter superfamily.

The protein localises to the cell membrane. Its function is as follows. Probably part of an ABC transporter complex. Responsible for energy coupling to the transport system. The sequence is that of Putative ABC transporter ATP-binding protein MK0182 from Methanopyrus kandleri (strain AV19 / DSM 6324 / JCM 9639 / NBRC 100938).